The sequence spans 467 residues: Ribosomal protein uS12 methylthiotransferase RimO (467 aa).

Residues 1–27 (MTSNPPDLRPDLAPKPTFGTAPRPDQP) form a disordered region. In terms of domain architecture, MTTase N-terminal spans 27-137 (PTLGMVSLGC…VLDAVHAAVP (111 aa)). [4Fe-4S] cluster-binding residues include cysteine 36, cysteine 72, cysteine 101, cysteine 168, cysteine 172, and cysteine 175. The Radical SAM core domain maps to 154 to 397 (LTPRHFSYLK…MEKAQAISEA (244 aa)). One can recognise a TRAM domain in the interval 400 to 467 (ASKVGQTLQV…GEYDLWGALR (68 aa)).

This sequence belongs to the methylthiotransferase family. RimO subfamily. [4Fe-4S] cluster is required as a cofactor.

Its subcellular location is the cytoplasm. The enzyme catalyses L-aspartate(89)-[ribosomal protein uS12]-hydrogen + (sulfur carrier)-SH + AH2 + 2 S-adenosyl-L-methionine = 3-methylsulfanyl-L-aspartate(89)-[ribosomal protein uS12]-hydrogen + (sulfur carrier)-H + 5'-deoxyadenosine + L-methionine + A + S-adenosyl-L-homocysteine + 2 H(+). In terms of biological role, catalyzes the methylthiolation of an aspartic acid residue of ribosomal protein uS12. The chain is Ribosomal protein uS12 methylthiotransferase RimO from Ruegeria sp. (strain TM1040) (Silicibacter sp.).